We begin with the raw amino-acid sequence, 1070 residues long: Ubiquitin-protein ligase E3B (1070 aa).

At Met1 the chain carries N-acetylmethionine. The IQ domain maps to 29–58 (RERSAVTIQALVRSFLCRRRLHRDIRKEID). Ser421 bears the Phosphoserine mark. The region spanning 704-1070 (SQHAMKGVIR…ISMNTGFELS (367 aa)) is the HECT domain. Catalysis depends on Cys1038, which acts as the Glycyl thioester intermediate.

Widely expressed. High expression is observed in developing central nervous system.

Its subcellular location is the postsynaptic density. The enzyme catalyses S-ubiquitinyl-[E2 ubiquitin-conjugating enzyme]-L-cysteine + [acceptor protein]-L-lysine = [E2 ubiquitin-conjugating enzyme]-L-cysteine + N(6)-ubiquitinyl-[acceptor protein]-L-lysine.. The protein operates within protein modification; protein ubiquitination. In terms of biological role, E3 ubiquitin-protein ligase which accepts ubiquitin from an E2 ubiquitin-conjugating enzyme in the form of a thioester and then directly transfers the ubiquitin to targeted substrates. Ubiquitinates BCKDK and targets it for degradation, thereby regulating various metabolic processes. Involved in the positive regulation of neurite branching in hippocampal neurons and the control of neuronal spine number and morphology, through the ubiquitination of PPP3CC. This is Ubiquitin-protein ligase E3B (Ube3b) from Mus musculus (Mouse).